The chain runs to 144 residues: Large ribosomal subunit protein uL13 (144 aa).

The disordered stretch occupies residues 125–144 (YRGPEHPHQAQKPQPLEVKA).

The protein belongs to the universal ribosomal protein uL13 family. Part of the 50S ribosomal subunit.

Its function is as follows. This protein is one of the early assembly proteins of the 50S ribosomal subunit, although it is not seen to bind rRNA by itself. It is important during the early stages of 50S assembly. The protein is Large ribosomal subunit protein uL13 of Aquifex aeolicus (strain VF5).